The primary structure comprises 165 residues: Neurotrophin-3 (165 aa).

Residues 1-3 form the signal peptide; it reads IQS. Residues 4 to 119 constitute a propeptide that is removed on maturation; sequence TSMDQGSLSE…VLNQTSRRKR (116 aa). Asparagine 112 carries N-linked (GlcNAc...) asparagine glycosylation.

It belongs to the NGF-beta family.

It is found in the secreted. Seems to promote the survival of visceral and proprioceptive sensory neurons. The sequence is that of Neurotrophin-3 (NTF3) from Morelia spilota (Carpet python).